The chain runs to 221 residues: Extracellular superoxide dismutase [Cu-Zn] (221 aa).

The first 19 residues, 1–19 (MKTRVVLILALSVCIEAAS), serve as a signal peptide directing secretion. Asn-56 carries an N-linked (GlcNAc...) asparagine glycan. Cu cation is bound by residues His-70, His-72, and His-87. A disulfide bond links Cys-81 and Cys-170. Zn(2+) is bound by residues His-87, His-95, His-104, and Asp-107. His-144 serves as a coordination point for Cu cation.

It belongs to the Cu-Zn superoxide dismutase family. The cofactor is Cu cation. It depends on Zn(2+) as a cofactor. Isoform 2 is preferentially expressed in eggs.

The protein localises to the secreted. It localises to the extracellular space. Its subcellular location is the membrane. The enzyme catalyses 2 superoxide + 2 H(+) = H2O2 + O2. Functionally, protects cells against oxidative stress by converting superoxide radicals to hydrogen peroxide. Oxidative stress is involved in various biological dysfunctions and senescence. The polypeptide is Extracellular superoxide dismutase [Cu-Zn] (sod-4) (Caenorhabditis elegans).